The primary structure comprises 282 residues: Protein-export membrane protein SecF (282 aa).

Helical transmembrane passes span 16 to 36 (MVAL…FNTV), 126 to 146 (QAIW…FVAF), 148 to 168 (IFIP…ITAA), 169 to 189 (FMDV…LMLI), 221 to 241 (GIIM…VFSL), and 253 to 273 (VLII…AGLL).

This sequence belongs to the SecD/SecF family. SecF subfamily. Part of the protein translocation apparatus. Forms a complex with SecD.

Its subcellular location is the cell membrane. Involved in protein export. The protein is Protein-export membrane protein SecF of Methanolacinia petrolearia (strain DSM 11571 / OCM 486 / SEBR 4847) (Methanoplanus petrolearius).